Consider the following 579-residue polypeptide: uncharacterized protein (579 aa).

It belongs to the UbiD family.

This is an uncharacterized protein from Chlamydia muridarum (strain MoPn / Nigg).